A 285-amino-acid chain; its full sequence is uncharacterized protein (285 aa).

This sequence belongs to the methyltransferase superfamily.

This is an uncharacterized protein from Mycobacterium tuberculosis (strain CDC 1551 / Oshkosh).